The primary structure comprises 373 residues: Anhydro-N-acetylmuramic acid kinase (373 aa).

An ATP-binding site is contributed by 12–19 (GTSLDGVD).

This sequence belongs to the anhydro-N-acetylmuramic acid kinase family.

It carries out the reaction 1,6-anhydro-N-acetyl-beta-muramate + ATP + H2O = N-acetyl-D-muramate 6-phosphate + ADP + H(+). The protein operates within amino-sugar metabolism; 1,6-anhydro-N-acetylmuramate degradation. It participates in cell wall biogenesis; peptidoglycan recycling. Functionally, catalyzes the specific phosphorylation of 1,6-anhydro-N-acetylmuramic acid (anhMurNAc) with the simultaneous cleavage of the 1,6-anhydro ring, generating MurNAc-6-P. Is required for the utilization of anhMurNAc either imported from the medium or derived from its own cell wall murein, and thus plays a role in cell wall recycling. The chain is Anhydro-N-acetylmuramic acid kinase from Erwinia tasmaniensis (strain DSM 17950 / CFBP 7177 / CIP 109463 / NCPPB 4357 / Et1/99).